The chain runs to 639 residues: CREB3 regulatory factor (639 aa).

The tract at residues 302–422 (PLPQEGPGSL…SVEDLKEVTS (121 aa)) is disordered. The span at 310–328 (SLAAGESSSLSASTSVSDS) shows a compositional bias: low complexity. Polar residues predominate over residues 339-351 (LFVSDNLGEQPTK). A compositionally biased stretch (acidic residues) spans 355–370 (EEDEEDEEDVDDEDHD). Residues 371–380 (EGFGSEHELS) show a composition bias toward basic and acidic residues. The segment covering 381 to 401 (ENEEEEEEEEDYEDDKDDDIS) has biased composition (acidic residues). The bZIP domain occupies 521–584 (TARPRSRKEK…VNRVQNPRDE (64 aa)). A basic motif region spans residues 523 to 532 (RPRSRKEKNK). A leucine-zipper region spans residues 533-540 (LASRACRL).

The protein belongs to the bZIP family. CREBRF subfamily. Interacts (via leucine-zipper domain) with CREB3 (via leucine-zipper domain); the interaction promotes CREB3 degradation. Probably degraded by the proteasome.

The protein resides in the nucleus. In terms of biological role, acts as a negative regulator of the endoplasmic reticulum stress response or unfolded protein response (UPR). Represses the transcriptional activity of CREB3 during the UPR. Recruits CREB3 into nuclear foci. The protein is CREB3 regulatory factor (CREBRF) of Homo sapiens (Human).